Here is a 362-residue protein sequence, read N- to C-terminus: Adenosine deaminase (362 aa).

The Zn(2+) site is built by H19 and H21. Substrate-binding residues include H21, D23, and G181. Residue H208 coordinates Zn(2+). The Proton donor role is filled by E211. D300 is a Zn(2+) binding site.

The protein belongs to the metallo-dependent hydrolases superfamily. Adenosine and AMP deaminases family. Adenosine deaminase subfamily. Zn(2+) serves as cofactor.

It carries out the reaction adenosine + H2O + H(+) = inosine + NH4(+). The catalysed reaction is 2'-deoxyadenosine + H2O + H(+) = 2'-deoxyinosine + NH4(+). In terms of biological role, catalyzes the hydrolytic deamination of adenosine and 2-deoxyadenosine. The sequence is that of Adenosine deaminase from Mycobacterium leprae (strain TN).